The chain runs to 301 residues: Homoserine O-acetyltransferase (301 aa).

Residue C142 is the Acyl-thioester intermediate of the active site. The substrate site is built by K163 and S192. The Proton acceptor role is filled by H235. Residue E237 is part of the active site. R249 provides a ligand contact to substrate.

It belongs to the MetA family.

Its subcellular location is the cytoplasm. The catalysed reaction is L-homoserine + acetyl-CoA = O-acetyl-L-homoserine + CoA. It participates in amino-acid biosynthesis; L-methionine biosynthesis via de novo pathway; O-acetyl-L-homoserine from L-homoserine: step 1/1. Its function is as follows. Transfers an acetyl group from acetyl-CoA to L-homoserine, forming acetyl-L-homoserine. In Succinatimonas hippei (strain DSM 22608 / JCM 16073 / KCTC 15190 / YIT 12066), this protein is Homoserine O-acetyltransferase.